The chain runs to 561 residues: MLASGVVYFLETHVSWSSIAASCALVCIVSACYVVWSLLHVPYDQGIPAVGIPKGILGRAKAVYDSIAHGDVPIAEGYRSVSSEPFKAATEALTVAQWQHNKSGQIFRVPSLMDSFSFVYVIPSPLIPQYNAAPEERVSFTSGLEHLDLTPYTLLSHRFTQSPLHLGALRSTLSGGREVEVLADEVATSFTTSWKFPSQWTTIPNLYYSLLDIITRDVNRAYVGAEFCRNRDYIETIIDFTPEVVRCRTILRLIPGFLRPIVSPYVLRHNRARRDKIHSILGDEIKKRKSMLGSKDSSKPTDLLQALIVEANKSPQSTAESDPKMLVTRLLALNFVGNRTASVAFTHAIWSLLHCESQGLGYWNAMREEVENIFASDDSDEINESKKHYQAQGARWMRWNKTHTAQMGLVESFLKESLRYNTDTNLECKRMIVDPEGYRFKNGMNLKRGTVSAVPIWQIHHDPDLYPEPEDFDARRFLQGDGGAQGRKVGMQTTSEYFLAFGVGKHACPGRFFASQHLKLLLAFILLNYDIQPVSRPEDEWYGSSHMPNMAAGLTIRARQD.

Residues 19 to 39 (IAASCALVCIVSACYVVWSLL) traverse the membrane as a helical segment. Residue Cys-508 participates in heme binding.

The protein belongs to the cytochrome P450 family. Requires heme as cofactor.

The protein resides in the membrane. Its pathway is secondary metabolite biosynthesis. In terms of biological role, cytochrome P450 monooxygenase; part of the cluster that mediates the biosynthesis of a highly modified cyclo-arginine-tryptophan dipeptide (cRW). The first step of the pathway is perfornmed by the arginine-containing cyclodipeptide synthase (RCPDS) avaA that acts as the scaffold-generating enzyme and is responsible for formation of the cyclo-Arg-Trp (cRW) diketopiperazine. AvaB then acts as a multifunctional flavoenzyme that is responsible for generating the cyclo-Arg-formylkynurenine DKP, which can be deformylated by avaC. AvaB then further catalyzes an additional N-oxidation followed by cyclization and dehydration. The next step is an N-acetylation of the guanidine group catalyzed by the arginine N-acetyltransferase avaD. The roles of the additional enzymes identified within the ava cluster still have to be determined. The sequence is that of Cytochrome P450 monooxygenase avaL from Aspergillus versicolor.